The primary structure comprises 160 residues: MKSIVNDKILLTQQKLEEIEKELEHLINVERVNVIQEIKDARSQGDLSENAEYDVAREKQGIIESRIRELETIISKAKIIKADLGSSRVSIGSKVSLENVESGEIQTFQIVSSIDADPFKSKISNFSPIAQALLGQHQGDEVEVDVNEKYSVRILEVINE.

Positions 3–84 form a coiled coil; sequence SIVNDKILLT…SKAKIIKADL (82 aa).

This sequence belongs to the GreA/GreB family.

Functionally, necessary for efficient RNA polymerase transcription elongation past template-encoded arresting sites. The arresting sites in DNA have the property of trapping a certain fraction of elongating RNA polymerases that pass through, resulting in locked ternary complexes. Cleavage of the nascent transcript by cleavage factors such as GreA or GreB allows the resumption of elongation from the new 3'terminus. GreA releases sequences of 2 to 3 nucleotides. This chain is Transcription elongation factor GreA, found in Mesomycoplasma hyopneumoniae (strain 7448) (Mycoplasma hyopneumoniae).